The following is a 683-amino-acid chain: Acetyl-coenzyme A synthetase 2 (683 aa).

CoA contacts are provided by residues 207 to 210 and T326; that span reads RGGK. ATP is bound by residues 402 to 404, 426 to 431, D517, and R532; these read GEP and DTFWQT. Position 540 (S540) interacts with CoA. R543 provides a ligand contact to ATP. Position 613 (R613) interacts with CoA.

It belongs to the ATP-dependent AMP-binding enzyme family.

The catalysed reaction is acetate + ATP + CoA = acetyl-CoA + AMP + diphosphate. This chain is Acetyl-coenzyme A synthetase 2 (ACS2), found in Candida glabrata (strain ATCC 2001 / BCRC 20586 / JCM 3761 / NBRC 0622 / NRRL Y-65 / CBS 138) (Yeast).